We begin with the raw amino-acid sequence, 100 residues long: Small ribosomal subunit protein uS14 (100 aa).

The protein belongs to the universal ribosomal protein uS14 family. In terms of assembly, part of the 30S ribosomal subunit. Contacts proteins S3 and S10.

In terms of biological role, binds 16S rRNA, required for the assembly of 30S particles and may also be responsible for determining the conformation of the 16S rRNA at the A site. The polypeptide is Small ribosomal subunit protein uS14 (Trichormus variabilis (strain ATCC 29413 / PCC 7937) (Anabaena variabilis)).